Consider the following 173-residue polypeptide: Crossover junction endodeoxyribonuclease RuvC (173 aa).

Residues Asp8, Glu67, and Asp139 contribute to the active site. Positions 8, 67, and 139 each coordinate Mg(2+).

It belongs to the RuvC family. In terms of assembly, homodimer which binds Holliday junction (HJ) DNA. The HJ becomes 2-fold symmetrical on binding to RuvC with unstacked arms; it has a different conformation from HJ DNA in complex with RuvA. In the full resolvosome a probable DNA-RuvA(4)-RuvB(12)-RuvC(2) complex forms which resolves the HJ. Requires Mg(2+) as cofactor.

It is found in the cytoplasm. It carries out the reaction Endonucleolytic cleavage at a junction such as a reciprocal single-stranded crossover between two homologous DNA duplexes (Holliday junction).. In terms of biological role, the RuvA-RuvB-RuvC complex processes Holliday junction (HJ) DNA during genetic recombination and DNA repair. Endonuclease that resolves HJ intermediates. Cleaves cruciform DNA by making single-stranded nicks across the HJ at symmetrical positions within the homologous arms, yielding a 5'-phosphate and a 3'-hydroxyl group; requires a central core of homology in the junction. The consensus cleavage sequence is 5'-(A/T)TT(C/G)-3'. Cleavage occurs on the 3'-side of the TT dinucleotide at the point of strand exchange. HJ branch migration catalyzed by RuvA-RuvB allows RuvC to scan DNA until it finds its consensus sequence, where it cleaves and resolves the cruciform DNA. This chain is Crossover junction endodeoxyribonuclease RuvC, found in Enterobacter sp. (strain 638).